We begin with the raw amino-acid sequence, 155 residues long: D-aminoacyl-tRNA deacylase (155 aa).

The Gly-cisPro motif, important for rejection of L-amino acids motif lies at 137–138; sequence GP.

This sequence belongs to the DTD family. As to quaternary structure, homodimer.

It localises to the cytoplasm. It catalyses the reaction glycyl-tRNA(Ala) + H2O = tRNA(Ala) + glycine + H(+). The enzyme catalyses a D-aminoacyl-tRNA + H2O = a tRNA + a D-alpha-amino acid + H(+). In terms of biological role, an aminoacyl-tRNA editing enzyme that deacylates mischarged D-aminoacyl-tRNAs. Also deacylates mischarged glycyl-tRNA(Ala), protecting cells against glycine mischarging by AlaRS. Acts via tRNA-based rather than protein-based catalysis; rejects L-amino acids rather than detecting D-amino acids in the active site. By recycling D-aminoacyl-tRNA to D-amino acids and free tRNA molecules, this enzyme counteracts the toxicity associated with the formation of D-aminoacyl-tRNA entities in vivo and helps enforce protein L-homochirality. The protein is D-aminoacyl-tRNA deacylase of Nitrosococcus oceani (strain ATCC 19707 / BCRC 17464 / JCM 30415 / NCIMB 11848 / C-107).